A 65-amino-acid chain; its full sequence is Large ribosomal subunit protein bL33m (65 aa).

The transit peptide at 1 to 8 (MFLTTANL) directs the protein to the mitochondrion.

Belongs to the bacterial ribosomal protein bL33 family. Component of the mitochondrial ribosome large subunit (39S) which comprises a 16S rRNA and about 50 distinct proteins.

It localises to the mitochondrion. This is Large ribosomal subunit protein bL33m (mrpl33) from Tetraodon nigroviridis (Spotted green pufferfish).